Reading from the N-terminus, the 426-residue chain is Serine--tRNA ligase (426 aa).

Thr233 to Glu235 contributes to the L-serine binding site. Arg264–Glu266 is an ATP binding site. Residue Glu287 coordinates L-serine. Glu351–Ser354 serves as a coordination point for ATP. Ser387 is an L-serine binding site.

This sequence belongs to the class-II aminoacyl-tRNA synthetase family. Type-1 seryl-tRNA synthetase subfamily. Homodimer. The tRNA molecule binds across the dimer.

It is found in the cytoplasm. The enzyme catalyses tRNA(Ser) + L-serine + ATP = L-seryl-tRNA(Ser) + AMP + diphosphate + H(+). It catalyses the reaction tRNA(Sec) + L-serine + ATP = L-seryl-tRNA(Sec) + AMP + diphosphate + H(+). Its pathway is aminoacyl-tRNA biosynthesis; selenocysteinyl-tRNA(Sec) biosynthesis; L-seryl-tRNA(Sec) from L-serine and tRNA(Sec): step 1/1. Functionally, catalyzes the attachment of serine to tRNA(Ser). Is also able to aminoacylate tRNA(Sec) with serine, to form the misacylated tRNA L-seryl-tRNA(Sec), which will be further converted into selenocysteinyl-tRNA(Sec). This is Serine--tRNA ligase from Xylella fastidiosa (strain M23).